Here is a 96-residue protein sequence, read N- to C-terminus: Glutamyl-tRNA(Gln) amidotransferase subunit C (96 aa).

This sequence belongs to the GatC family. In terms of assembly, heterotrimer of A, B and C subunits.

It carries out the reaction L-glutamyl-tRNA(Gln) + L-glutamine + ATP + H2O = L-glutaminyl-tRNA(Gln) + L-glutamate + ADP + phosphate + H(+). It catalyses the reaction L-aspartyl-tRNA(Asn) + L-glutamine + ATP + H2O = L-asparaginyl-tRNA(Asn) + L-glutamate + ADP + phosphate + 2 H(+). Its function is as follows. Allows the formation of correctly charged Asn-tRNA(Asn) or Gln-tRNA(Gln) through the transamidation of misacylated Asp-tRNA(Asn) or Glu-tRNA(Gln) in organisms which lack either or both of asparaginyl-tRNA or glutaminyl-tRNA synthetases. The reaction takes place in the presence of glutamine and ATP through an activated phospho-Asp-tRNA(Asn) or phospho-Glu-tRNA(Gln). This is Glutamyl-tRNA(Gln) amidotransferase subunit C from Neisseria meningitidis serogroup B (strain ATCC BAA-335 / MC58).